We begin with the raw amino-acid sequence, 356 residues long: Arginine kinase (356 aa).

Residues glutamate 8–glycine 91 form the Phosphagen kinase N-terminal domain. Glycine 64–tyrosine 68 lines the substrate pocket. Residues tyrosine 119 to leucine 356 enclose the Phosphagen kinase C-terminal domain. Residues serine 122–arginine 126 and histidine 185 each bind ATP. A substrate-binding site is contributed by glutamate 225. Arginine 229 serves as a coordination point for ATP. Cysteine 271 lines the substrate pocket. Residues arginine 280–histidine 284 and arginine 309–glutamate 314 contribute to the ATP site. Glutamate 314 contacts substrate.

This sequence belongs to the ATP:guanido phosphotransferase family.

It carries out the reaction L-arginine + ATP = N(omega)-phospho-L-arginine + ADP + H(+). The protein is Arginine kinase (ARGK) of Schistocerca americana (American grasshopper).